The chain runs to 347 residues: Dihydroorotate dehydrogenase (quinone) (347 aa).

FMN contacts are provided by residues 62–66 (AGLDK) and T86. K66 contacts substrate. Position 111–115 (111–115 (NRMGF)) interacts with substrate. Residues N142 and N175 each contribute to the FMN site. N175 is a substrate binding site. S178 serves as the catalytic Nucleophile. N180 lines the substrate pocket. Residues K220 and T248 each coordinate FMN. 249–250 (NT) is a binding site for substrate. FMN is bound by residues G271, G300, and 321-322 (YS).

This sequence belongs to the dihydroorotate dehydrogenase family. Type 2 subfamily. As to quaternary structure, monomer. Requires FMN as cofactor.

The protein localises to the cell membrane. It carries out the reaction (S)-dihydroorotate + a quinone = orotate + a quinol. Its pathway is pyrimidine metabolism; UMP biosynthesis via de novo pathway; orotate from (S)-dihydroorotate (quinone route): step 1/1. Catalyzes the conversion of dihydroorotate to orotate with quinone as electron acceptor. This Dechloromonas aromatica (strain RCB) protein is Dihydroorotate dehydrogenase (quinone).